The primary structure comprises 409 residues: Endoglucanase B (409 aa).

The N-terminal stretch at 1-21 (MKLKRIAALLTAAVMSVGVMA) is a signal peptide. The interval 23–66 (CGGSKSDDKSKADTKSAAETSGAEGDSSESEEIPVSQTHTNDPM) is disordered. Basic and acidic residues predominate over residues 27 to 38 (KSDDKSKADTKS). The segment covering 57-66 (VSQTHTNDPM) has biased composition (polar residues). Glutamate 212 (proton donor) is an active-site residue. The active-site Nucleophile is the glutamate 332.

Belongs to the glycosyl hydrolase 5 (cellulase A) family.

The enzyme catalyses Endohydrolysis of (1-&gt;4)-beta-D-glucosidic linkages in cellulose, lichenin and cereal beta-D-glucans.. The chain is Endoglucanase B (celB) from Ruminococcus albus.